Reading from the N-terminus, the 389-residue chain is Chalcone synthase H2 (389 aa).

Residue cysteine 164 is part of the active site.

Belongs to the thiolase-like superfamily. Chalcone/stilbene synthases family.

The protein resides in the cytoplasm. The catalysed reaction is (E)-4-coumaroyl-CoA + 3 malonyl-CoA + 3 H(+) = 2',4,4',6'-tetrahydroxychalcone + 3 CO2 + 4 CoA. It participates in secondary metabolite biosynthesis; flavonoid biosynthesis. Involved in the biosynthesis of prenylated phenolics natural products which contribute to the bitter taste of beer and display broad biological activities. Chalcone synthase that can use 4-coumaroyl-CoA to produce 4,2',4',6'-tetrahydroxychalcone (also termed naringenin-chalcone or chalcone) which can, under specific conditions, spontaneously isomerize into naringenin. This chain is Chalcone synthase H2, found in Humulus lupulus (European hop).